Reading from the N-terminus, the 220-residue chain is Claudin-6 (220 aa).

At Met-1 to Gln-7 the chain is on the cytoplasmic side. A helical transmembrane segment spans residues Ile-8–Pro-28. Residues Met-29–Arg-81 lie on the Extracellular side of the membrane. A helical transmembrane segment spans residues Ala-82–Ala-102. The Cytoplasmic portion of the chain corresponds to Lys-103–Arg-116. Residues Leu-117–Cys-137 form a helical membrane-spanning segment. The Extracellular portion of the chain corresponds to Trp-138–Leu-160. The helical transmembrane segment at Gly-161–Leu-181 threads the bilayer. Topologically, residues Cys-182–Val-220 are cytoplasmic. Ser-201, Ser-203, Ser-208, and Ser-212 each carry phosphoserine. Residues Tyr-219–Val-220 form an interactions with TJP1, TJP2 and TJP3 region.

Belongs to the claudin family. As to quaternary structure, directly interacts with TJP1/ZO-1, TJP2/ZO-2 and TJP3/ZO-3. Interacts with CLDN1, CD81 and OCLN. In terms of tissue distribution, expressed in the liver, in peripheral blood mononuclear cells and hepatocarcinoma cell lines.

It is found in the cell junction. The protein resides in the tight junction. The protein localises to the cell membrane. Plays a major role in tight junction-specific obliteration of the intercellular space. Its function is as follows. (Microbial infection) Acts as a receptor for hepatitis C virus (HCV) entry into hepatic cells. This Homo sapiens (Human) protein is Claudin-6 (CLDN6).